An 85-amino-acid chain; its full sequence is Small ribosomal subunit protein bS20 (85 aa).

Positions 1 to 25 (MANIKSAIKRAKLSEERRAHNASIK) are disordered.

The protein belongs to the bacterial ribosomal protein bS20 family.

Its function is as follows. Binds directly to 16S ribosomal RNA. The chain is Small ribosomal subunit protein bS20 from Bacillus anthracis (strain A0248).